Consider the following 179-residue polypeptide: Phospholipase A2 (179 aa).

Residues 1–21 (MHALRSSVLALWLCLHVSVRA) form the signal peptide. Positions 22–39 (WMTYRSANGLDEYEPEDR) are excised as a propeptide. The Ca(2+) site is built by Trp47, Gly49, and Gly51. Intrachain disulfides connect Cys48/Cys70, Cys69/Cys109, Cys76/Cys102, Cys100/Cys133, and Cys142/Cys150. His73 is an active-site residue. Asp74 serves as a coordination point for Ca(2+). The active site involves Asp103.

Belongs to the phospholipase A2 family. Group III subfamily. Requires Ca(2+) as cofactor. In terms of tissue distribution, expressed by the venom gland.

It is found in the secreted. It carries out the reaction a 1,2-diacyl-sn-glycero-3-phosphocholine + H2O = a 1-acyl-sn-glycero-3-phosphocholine + a fatty acid + H(+). In terms of biological role, may potentiate Xylotoxin(1)-Xa1a DRG activation and cell lysis, since the orthologous A.mellifera PA2 potentiates Xylotoxin(1)-Xa1a DRG activation and cell lysis. In vivo, intraplantar injection in mice may potentiate spontaneous pain behaviors and paw swelling caused by Xylotoxin(1)-Xa1a, since the orthologous A.mellifera PA2 shows this effect. PLA2 catalyzes the calcium-dependent hydrolysis of the 2-acyl groups in 3-sn-phosphoglycerides. This is Phospholipase A2 from Xylocopa aruana (Great carpenter bee).